The primary structure comprises 344 residues: Dihydroorotase (344 aa).

2 residues coordinate Zn(2+): H13 and H15. Residues 15–17 (HLR) and N41 each bind substrate. Residues K99, H136, and H174 each coordinate Zn(2+). K99 carries the post-translational modification N6-carboxylysine. H136 contacts substrate. L219 provides a ligand contact to substrate. D247 lines the Zn(2+) pocket. Residue D247 is part of the active site. Residues H251 and A263 each contribute to the substrate site.

The protein belongs to the metallo-dependent hydrolases superfamily. DHOase family. Class II DHOase subfamily. Homodimer. It depends on Zn(2+) as a cofactor.

The enzyme catalyses (S)-dihydroorotate + H2O = N-carbamoyl-L-aspartate + H(+). It functions in the pathway pyrimidine metabolism; UMP biosynthesis via de novo pathway; (S)-dihydroorotate from bicarbonate: step 3/3. Catalyzes the reversible cyclization of carbamoyl aspartate to dihydroorotate. The chain is Dihydroorotase from Shewanella denitrificans (strain OS217 / ATCC BAA-1090 / DSM 15013).